Reading from the N-terminus, the 211-residue chain is Protein-L-isoaspartate O-methyltransferase (211 aa).

The active site involves serine 60.

This sequence belongs to the methyltransferase superfamily. L-isoaspartyl/D-aspartyl protein methyltransferase family.

The protein localises to the cytoplasm. The enzyme catalyses [protein]-L-isoaspartate + S-adenosyl-L-methionine = [protein]-L-isoaspartate alpha-methyl ester + S-adenosyl-L-homocysteine. Its function is as follows. Catalyzes the methyl esterification of L-isoaspartyl residues in peptides and proteins that result from spontaneous decomposition of normal L-aspartyl and L-asparaginyl residues. It plays a role in the repair and/or degradation of damaged proteins. This is Protein-L-isoaspartate O-methyltransferase from Pseudomonas syringae pv. tomato (strain ATCC BAA-871 / DC3000).